The following is a 416-amino-acid chain: Glutamate dehydrogenase A2 (416 aa).

K105 is an active-site residue.

This sequence belongs to the Glu/Leu/Phe/Val dehydrogenases family. In terms of assembly, homohexamer.

The sequence is that of Glutamate dehydrogenase A2 (gdhA2) from Halobacterium salinarum (strain ATCC 700922 / JCM 11081 / NRC-1) (Halobacterium halobium).